A 282-amino-acid polypeptide reads, in one-letter code: tRNA U34 carboxymethyltransferase (282 aa).

Residues lysine 54, tryptophan 68, lysine 73, glycine 92, 114-116, tyrosine 161, and arginine 276 each bind carboxy-S-adenosyl-L-methionine; that span reads DPS.

This sequence belongs to the class I-like SAM-binding methyltransferase superfamily. CmoB family. In terms of assembly, homotetramer.

The catalysed reaction is carboxy-S-adenosyl-L-methionine + 5-hydroxyuridine(34) in tRNA = 5-carboxymethoxyuridine(34) in tRNA + S-adenosyl-L-homocysteine + H(+). Catalyzes carboxymethyl transfer from carboxy-S-adenosyl-L-methionine (Cx-SAM) to 5-hydroxyuridine (ho5U) to form 5-carboxymethoxyuridine (cmo5U) at position 34 in tRNAs. The protein is tRNA U34 carboxymethyltransferase of Campylobacter fetus subsp. fetus (strain 82-40).